Here is a 208-residue protein sequence, read N- to C-terminus: Protein-L-isoaspartate O-methyltransferase (208 aa).

Serine 59 is a catalytic residue.

This sequence belongs to the methyltransferase superfamily. L-isoaspartyl/D-aspartyl protein methyltransferase family.

Its subcellular location is the cytoplasm. The catalysed reaction is [protein]-L-isoaspartate + S-adenosyl-L-methionine = [protein]-L-isoaspartate alpha-methyl ester + S-adenosyl-L-homocysteine. In terms of biological role, catalyzes the methyl esterification of L-isoaspartyl residues in peptides and proteins that result from spontaneous decomposition of normal L-aspartyl and L-asparaginyl residues. It plays a role in the repair and/or degradation of damaged proteins. This Proteus mirabilis (strain HI4320) protein is Protein-L-isoaspartate O-methyltransferase.